We begin with the raw amino-acid sequence, 339 residues long: Ornithine carbamoyltransferase, catabolic (339 aa).

Carbamoyl phosphate contacts are provided by residues 57-60 (STRT), glutamine 84, arginine 108, and 135-138 (HPTQ). L-ornithine contacts are provided by residues asparagine 167, aspartate 231, and 235–236 (SM). Carbamoyl phosphate-binding positions include 274–275 (CL) and arginine 319.

It belongs to the aspartate/ornithine carbamoyltransferase superfamily. OTCase family.

Its subcellular location is the cytoplasm. The enzyme catalyses carbamoyl phosphate + L-ornithine = L-citrulline + phosphate + H(+). Its pathway is amino-acid degradation; L-arginine degradation via ADI pathway; carbamoyl phosphate from L-arginine: step 2/2. In terms of biological role, reversibly catalyzes the transfer of the carbamoyl group from carbamoyl phosphate (CP) to the N(epsilon) atom of ornithine (ORN) to produce L-citrulline. The chain is Ornithine carbamoyltransferase, catabolic (arcB) from Enterococcus faecalis (strain ATCC 700802 / V583).